Consider the following 146-residue polypeptide: Hemoglobin cathodic subunit beta (146 aa).

Positions 2–146 (HFSDAERDAI…VAAALSSRYF (145 aa)) constitute a Globin domain. Positions 63 and 92 each coordinate heme b.

This sequence belongs to the globin family. In terms of assembly, heterotetramer of two alpha chains and two beta chains. In terms of tissue distribution, red blood cells.

Functionally, involved in oxygen transport from gills to the various peripheral tissues. This Hoplosternum littorale (Hassar) protein is Hemoglobin cathodic subunit beta (hbb).